A 916-amino-acid chain; its full sequence is Protein O-GlcNAcase (916 aa).

Residues 1–50 form a disordered region; it reads MVQKESQAALEERESERNANPASVSGASLEPSAAPAPGEDNPSGAGAAAG. A GH84 domain is found at 60 to 336; it reads FLCGVVEGFY…TLATWYKSNM (277 aa). The a protein site is built by Gly-67, Lys-98, and Asp-174. Asp-175 (proton donor) is an active-site residue. Residues Tyr-219, 278–280, Asp-285, and Asn-313 each bind a protein; that span reads WDN. Ser-364 bears the Phosphoserine mark. The interval 440–480 is disordered; it reads QGAALSGEPSALTKEEEKKQPDEEPMDMVVEKQEESEHKSD. Basic and acidic residues-rich tracts occupy residues 452 to 461 and 468 to 480; these read TKEEEKKQPD and VVEKQEESEHKSD.

Belongs to the glycosyl hydrolase 84 family. In terms of assembly, monomer. Interacts with CLOCK. Post-translationally, proteolytically cleaved by caspase-3 during apoptosis. The fragments interact with each other; cleavage does not decrease enzyme activity. In terms of tissue distribution, detected in spleen (at protein level). Ubiquitous. Expressed at highest levels in the brain and spleen.

Its subcellular location is the nucleus. The protein resides in the cytoplasm. It carries out the reaction 3-O-(N-acetyl-beta-D-glucosaminyl)-L-seryl-[protein] + H2O = N-acetyl-D-glucosamine + L-seryl-[protein]. The enzyme catalyses 3-O-(N-acetyl-beta-D-glucosaminyl)-L-threonyl-[protein] + H2O = L-threonyl-[protein] + N-acetyl-D-glucosamine. Its activity is regulated as follows. Inhibited by Cu(2+), Hg(2+), Cd(2+) and Zn(2+) at 1 mM. Not inhibited by Co(2+), Mg(2+), Ca(2+), Mn(2+), Fe(3+) and EDTA. Also inhibited by sodium chloride at 1M and 2-amino-2-hydroxymethyl-1,3-propanediol (trishydroxymethylaminomethane) at 75 mM. Its function is as follows. Cleaves GlcNAc but not GalNAc from O-glycosylated proteins. Deglycosylates a large and diverse number of proteins, such as CRYAB, ELK1, GSDMD, LMNB1 and TAB1. Can use p-nitrophenyl-beta-GlcNAc and 4-methylumbelliferone-GlcNAc as substrates but not p-nitrophenyl-beta-GalNAc or p-nitrophenyl-alpha-GlcNAc (in vitro). Does not bind acetyl-CoA and does not have histone acetyltransferase activity. Functionally, lacks enzyme activity. This chain is Protein O-GlcNAcase, found in Rattus norvegicus (Rat).